The following is a 94-amino-acid chain: Probable Fe(2+)-trafficking protein (94 aa).

The protein belongs to the Fe(2+)-trafficking protein family.

Its function is as follows. Could be a mediator in iron transactions between iron acquisition and iron-requiring processes, such as synthesis and/or repair of Fe-S clusters in biosynthetic enzymes. The chain is Probable Fe(2+)-trafficking protein from Haemophilus ducreyi (strain 35000HP / ATCC 700724).